The sequence spans 477 residues: Metallopeptidase AprA (477 aa).

An N-terminal signal peptide occupies residues 1-20 (MSKAKDKAIVSAAQASTAYS). Histidine 183 lines the Zn(2+) pocket. Glutamate 184 is an active-site residue. Zn(2+) contacts are provided by histidine 187 and histidine 193. Ca(2+) contacts are provided by arginine 264, glycine 266, threonine 268, aspartate 296, glycine 298, glycine 299, aspartate 301, threonine 338, glutamate 340, glycine 345, glycine 347, aspartate 349, asparagine 354, alanine 356, asparagine 358, glycine 362, glycine 363, alanine 364, glycine 365, aspartate 367, glycine 371, alanine 372, glycine 373, glycine 374, aspartate 376, glycine 380, glycine 381, alanine 382, glycine 383, aspartate 385, aspartate 394, aspartate 401, aspartate 411, aspartate 453, serine 455, and aspartate 461. Hemolysin-type calcium-binding repeat units lie at residues 343–360 (FGGAGNDLIIGNNAANVI), 361–378 (KGGAGNDLIYGAGGADQL), and 379–391 (WGGAGNDTFVFGA).

Belongs to the peptidase M10B family. Requires Ca(2+) as cofactor. Zn(2+) serves as cofactor.

It is found in the secreted. With respect to regulation, is completely inhibited by the metal cation chelators 1,10-phenanthroline and EDTA, but PMSF, pepstatin A and E-64 have no effect on activity. Peptidase able to cleave azocasein and the milk substrates beta-casein and Na-caseinate. Can withstand UHT processing of milk, and is able to spoil UHT milk over the storage period. This Pseudomonas marginalis (Pseudomonas panacis) protein is Metallopeptidase AprA.